A 221-amino-acid polypeptide reads, in one-letter code: Uracil-DNA glycosylase 1 (221 aa).

Residue D61 is the Proton acceptor of the active site.

This sequence belongs to the uracil-DNA glycosylase (UDG) superfamily. UNG family.

The protein resides in the cytoplasm. The enzyme catalyses Hydrolyzes single-stranded DNA or mismatched double-stranded DNA and polynucleotides, releasing free uracil.. In terms of biological role, excises uracil residues from the DNA which can arise as a result of misincorporation of dUMP residues by DNA polymerase or due to deamination of cytosine. The chain is Uracil-DNA glycosylase 1 from Listeria innocua serovar 6a (strain ATCC BAA-680 / CLIP 11262).